Here is a 134-residue protein sequence, read N- to C-terminus: Small ribosomal subunit protein uS9c (134 aa).

Residues 105–114 (DHHLTRDARA) are compositionally biased toward basic and acidic residues. Residues 105-134 (DHHLTRDARAKERKKYGLHKARKAPQYSKR) form a disordered region. Residues 115-134 (KERKKYGLHKARKAPQYSKR) are compositionally biased toward basic residues.

The protein belongs to the universal ribosomal protein uS9 family.

It is found in the plastid. The protein localises to the cyanelle. In Cyanophora paradoxa, this protein is Small ribosomal subunit protein uS9c (rps9).